Reading from the N-terminus, the 125-residue chain is Snaclec B6 (125 aa).

3 disulfide bridges follow: C2-C13, C30-C119, and C96-C111. Positions 9-120 (HEGHCYKVFK…CNISQYFVCQ (112 aa)) constitute a C-type lectin domain. N95 carries N-linked (GlcNAc...) asparagine glycosylation. Residue N112 is glycosylated (N-linked (GlcNAc...) asparagine).

It belongs to the snaclec family. Heterodimer; disulfide-linked. As to expression, expressed by the venom gland.

It is found in the secreted. Its function is as follows. Interferes with one step of hemostasis (modulation of platelet aggregation, or coagulation cascade, for example). This Macrovipera lebetinus (Levantine viper) protein is Snaclec B6.